We begin with the raw amino-acid sequence, 427 residues long: Bifunctional enzyme MtnB/MtnX (427 aa).

The segment at 1–221 (MRKPLIICDF…LEETAEVKEW (221 aa)) is HK-MTPenyl-1-P phosphatase. The tract at residues 222-427 (MSEQKRQELA…KLKALQAYHV (206 aa)) is MTRu-1-P dehydratase. 2 residues coordinate Zn(2+): H317 and H319.

This sequence in the N-terminal section; belongs to the HAD-like hydrolase superfamily. MtnX family. In the C-terminal section; belongs to the aldolase class II family. MtnB subfamily. Homotetramer. Requires Zn(2+) as cofactor.

It carries out the reaction 5-(methylsulfanyl)-D-ribulose 1-phosphate = 5-methylsulfanyl-2,3-dioxopentyl phosphate + H2O. The enzyme catalyses 2-hydroxy-5-methylsulfanyl-3-oxopent-1-enyl phosphate + H2O = 1,2-dihydroxy-5-(methylsulfanyl)pent-1-en-3-one + phosphate. Its pathway is amino-acid biosynthesis; L-methionine biosynthesis via salvage pathway; L-methionine from S-methyl-5-thio-alpha-D-ribose 1-phosphate: step 2/6. It participates in amino-acid biosynthesis; L-methionine biosynthesis via salvage pathway; L-methionine from S-methyl-5-thio-alpha-D-ribose 1-phosphate: step 4/6. In terms of biological role, catalyzes the dehydration of methylthioribulose-1-phosphate (MTRu-1-P) into 2,3-diketo-5-methylthiopentyl-1-phosphate (DK-MTP-1-P). Dephosphorylates 2-hydroxy-3-keto-5-methylthiopentenyl-1-phosphate (HK-MTPenyl-1-P) yielding 1,2-dihydroxy-3-keto-5-methylthiopentene (DHK-MTPene). The chain is Bifunctional enzyme MtnB/MtnX (mtnB/mtnX) from Bacillus licheniformis (strain ATCC 14580 / DSM 13 / JCM 2505 / CCUG 7422 / NBRC 12200 / NCIMB 9375 / NCTC 10341 / NRRL NRS-1264 / Gibson 46).